The primary structure comprises 418 residues: D-amino acid dehydrogenase (418 aa).

FAD is bound at residue 3–17; the sequence is VLVLGAGVVGTTSAW.

It belongs to the DadA oxidoreductase family. FAD is required as a cofactor.

It catalyses the reaction a D-alpha-amino acid + A + H2O = a 2-oxocarboxylate + AH2 + NH4(+). It participates in amino-acid degradation; D-alanine degradation; NH(3) and pyruvate from D-alanine: step 1/1. Oxidative deamination of D-amino acids. The sequence is that of D-amino acid dehydrogenase from Dechloromonas aromatica (strain RCB).